The primary structure comprises 428 residues: Adenylosuccinate synthetase (428 aa).

GTP contacts are provided by residues 13 to 19 and 41 to 43; these read GDEGKGK and GHT. Catalysis depends on Asp14, which acts as the Proton acceptor. The Mg(2+) site is built by Asp14 and Gly41. Residues 14–17, 39–42, Thr130, Arg144, Gln223, Thr238, and Arg302 each bind IMP; these read DEGK and NAGH. His42 functions as the Proton donor in the catalytic mechanism. 298–304 contributes to the substrate binding site; sequence ASTGRRR. GTP-binding positions include Arg304, 330-332, and 412-414; these read KLD and STG.

This sequence belongs to the adenylosuccinate synthetase family. As to quaternary structure, homodimer. Mg(2+) is required as a cofactor.

The protein localises to the cytoplasm. The catalysed reaction is IMP + L-aspartate + GTP = N(6)-(1,2-dicarboxyethyl)-AMP + GDP + phosphate + 2 H(+). It participates in purine metabolism; AMP biosynthesis via de novo pathway; AMP from IMP: step 1/2. Functionally, plays an important role in the de novo pathway of purine nucleotide biosynthesis. Catalyzes the first committed step in the biosynthesis of AMP from IMP. The protein is Adenylosuccinate synthetase of Dichelobacter nodosus (strain VCS1703A).